The sequence spans 294 residues: Putative glutamine amidotransferase HI_1037 (294 aa).

The active site involves cysteine 18. The Glutamine amidotransferase type-2 domain occupies 18–266 (CQLLGMNCNT…NGGFVFFKNG (249 aa)).

This Haemophilus influenzae (strain ATCC 51907 / DSM 11121 / KW20 / Rd) protein is Putative glutamine amidotransferase HI_1037.